Here is a 383-residue protein sequence, read N- to C-terminus: Gamma-butyrobetaine dioxygenase (383 aa).

The Zn(2+) site is built by Cys-46, Cys-48, Cys-51, and His-91. Fe cation contacts are provided by His-209, Asp-211, and His-350.

This sequence belongs to the gamma-BBH/TMLD family. As to quaternary structure, homodimer. Requires Fe(2+) as cofactor. The cofactor is L-ascorbate.

The protein resides in the cytoplasm. The enzyme catalyses 4-(trimethylamino)butanoate + 2-oxoglutarate + O2 = carnitine + succinate + CO2. The protein operates within amine and polyamine biosynthesis; carnitine biosynthesis. Catalyzes the formation of L-carnitine from gamma-butyrobetaine. The sequence is that of Gamma-butyrobetaine dioxygenase from Pseudomonas sp. (strain AK-1).